A 429-amino-acid chain; its full sequence is Glutamate-1-semialdehyde 2,1-aminomutase (429 aa).

Lys-272 is modified (N6-(pyridoxal phosphate)lysine).

The protein belongs to the class-III pyridoxal-phosphate-dependent aminotransferase family. HemL subfamily. The cofactor is pyridoxal 5'-phosphate.

It is found in the cytoplasm. It carries out the reaction (S)-4-amino-5-oxopentanoate = 5-aminolevulinate. The protein operates within porphyrin-containing compound metabolism; protoporphyrin-IX biosynthesis; 5-aminolevulinate from L-glutamyl-tRNA(Glu): step 2/2. The sequence is that of Glutamate-1-semialdehyde 2,1-aminomutase from Methanothrix thermoacetophila (strain DSM 6194 / JCM 14653 / NBRC 101360 / PT) (Methanosaeta thermophila).